A 387-amino-acid polypeptide reads, in one-letter code: ATP phosphoribosyltransferase regulatory subunit (387 aa).

Belongs to the class-II aminoacyl-tRNA synthetase family. HisZ subfamily. As to quaternary structure, heteromultimer composed of HisG and HisZ subunits.

The protein resides in the cytoplasm. It participates in amino-acid biosynthesis; L-histidine biosynthesis; L-histidine from 5-phospho-alpha-D-ribose 1-diphosphate: step 1/9. In terms of biological role, required for the first step of histidine biosynthesis. May allow the feedback regulation of ATP phosphoribosyltransferase activity by histidine. The sequence is that of ATP phosphoribosyltransferase regulatory subunit from Methylobacillus flagellatus (strain ATCC 51484 / DSM 6875 / VKM B-1610 / KT).